The chain runs to 119 residues: UPF0102 protein FP2501 (119 aa).

The protein belongs to the UPF0102 family.

In Flavobacterium psychrophilum (strain ATCC 49511 / DSM 21280 / CIP 103535 / JIP02/86), this protein is UPF0102 protein FP2501.